The following is a 469-amino-acid chain: Probable Xaa-Pro aminopeptidase PEPP (469 aa).

Residues aspartate 265, aspartate 276, glutamate 399, and glutamate 439 each contribute to the Mn(2+) site.

This sequence belongs to the peptidase M24B family. Mn(2+) is required as a cofactor.

It catalyses the reaction Release of any N-terminal amino acid, including proline, that is linked to proline, even from a dipeptide or tripeptide.. Its function is as follows. Catalyzes the removal of a penultimate prolyl residue from the N-termini of peptides. The polypeptide is Probable Xaa-Pro aminopeptidase PEPP (PEPP) (Coccidioides posadasii (strain RMSCC 757 / Silveira) (Valley fever fungus)).